Here is a 90-residue protein sequence, read N- to C-terminus: Acylphosphatase (90 aa).

The Acylphosphatase-like domain occupies 3 to 90 (QYRIIVDGRV…DGFQKFNISY (88 aa)). Active-site residues include arginine 18 and asparagine 36.

Belongs to the acylphosphatase family.

The enzyme catalyses an acyl phosphate + H2O = a carboxylate + phosphate + H(+). This is Acylphosphatase (acyP) from Bacillus licheniformis (strain ATCC 14580 / DSM 13 / JCM 2505 / CCUG 7422 / NBRC 12200 / NCIMB 9375 / NCTC 10341 / NRRL NRS-1264 / Gibson 46).